A 131-amino-acid polypeptide reads, in one-letter code: Transcription antitermination protein NusB (131 aa).

Belongs to the NusB family.

Involved in transcription antitermination. Required for transcription of ribosomal RNA (rRNA) genes. Binds specifically to the boxA antiterminator sequence of the ribosomal RNA (rrn) operons. This is Transcription antitermination protein NusB from Bacillus subtilis (strain 168).